Reading from the N-terminus, the 77-residue chain is NAD(P)H-quinone oxidoreductase subunit L (77 aa).

2 helical membrane-spanning segments follow: residues 10–30 and 48–68; these read LLIATLYLSLSVTYLLVLPAG and LVMYFFVFFLFPGMLLLSPFL.

The protein belongs to the complex I NdhL subunit family. As to quaternary structure, NDH-1 can be composed of about 15 different subunits; different subcomplexes with different compositions have been identified which probably have different functions.

Its subcellular location is the cellular thylakoid membrane. It carries out the reaction a plastoquinone + NADH + (n+1) H(+)(in) = a plastoquinol + NAD(+) + n H(+)(out). The catalysed reaction is a plastoquinone + NADPH + (n+1) H(+)(in) = a plastoquinol + NADP(+) + n H(+)(out). In terms of biological role, NDH-1 shuttles electrons from an unknown electron donor, via FMN and iron-sulfur (Fe-S) centers, to quinones in the respiratory and/or the photosynthetic chain. The immediate electron acceptor for the enzyme in this species is believed to be plastoquinone. Couples the redox reaction to proton translocation, and thus conserves the redox energy in a proton gradient. Cyanobacterial NDH-1 also plays a role in inorganic carbon-concentration. The chain is NAD(P)H-quinone oxidoreductase subunit L from Picosynechococcus sp. (strain ATCC 27264 / PCC 7002 / PR-6) (Agmenellum quadruplicatum).